A 311-amino-acid polypeptide reads, in one-letter code: MPRSFLVKKIKADGFQCSGVSAPTYHPLETAYVLPGTRGPPGDNGYVAHCLPPSGYDGEQKPGLELAPAEPAYPAAASEEYSDPESPQSSLSARYFRGEAAVTDSYSMDAFFISDGRSRRRRAGAGGDAAGAGDAGGGGGGGGGGERAGRSGATAGGGHRHACAECGKTYATSSNLSRHKQTHRSLDSQLARKCPTCGKAYVSMPALAMHVLTHNLRHKCGVCGKAFSRPWLLQGHMRSHTGEKPFGCAHCGKAFADRSNLRAHMQTHSAFKHYRCRQCDKSFALKSYLHKHCEAACVKAAEPPPSAGPAS.

The tract at residues 1-20 (MPRSFLVKKIKADGFQCSGV) is SNAG domain. Disordered regions lie at residues 71-90 (PAYP…PQSS) and 120-156 (RRRA…ATAG). Residues 124–146 (GAGGDAAGAGDAGGGGGGGGGGE) are compositionally biased toward gly residues. 4 C2H2-type zinc fingers span residues 161 to 183 (HACA…KQTH), 192 to 214 (RKCP…VLTH), 218 to 240 (HKCG…MRSH), and 246 to 268 (FGCA…MQTH). The segment at 274–297 (YRCRQCDKSFALKSYLHKHCEAAC) adopts a C2H2-type 5; atypical zinc-finger fold.

It belongs to the snail C2H2-type zinc-finger protein family.

It is found in the nucleus. In terms of biological role, may be involved in transcriptional regulation. This chain is Transcriptional repressor scratch 2 (Scrt2), found in Mus musculus (Mouse).